The primary structure comprises 1905 residues: Low-density lipoprotein receptor-related protein 4 (1905 aa).

The signal sequence occupies residues 1–20 (MRRWWGALLLGALLCAHGIA). Topologically, residues 21–1725 (SSLECACGRS…AAPGEGLHVS (1705 aa)) are extracellular. LDL-receptor class A domains lie at 26–67 (ACGR…DGCT), 70–106 (TCSP…QDCP), 109–144 (ECEE…EQCD), 147–183 (KCSD…ESCP), 190–226 (PCNL…SDCS), 230–266 (PCRS…RNCT), 269–305 (MCTA…ENCE), and 311–350 (QCAS…QNCR). Intrachain disulfides connect Cys-27-Cys-44, Cys-34-Cys-57, Cys-51-Cys-66, Cys-71-Cys-83, Cys-78-Cys-96, Cys-90-Cys-105, Cys-110-Cys-122, Cys-117-Cys-135, Cys-129-Cys-143, Cys-148-Cys-160, Cys-155-Cys-173, Cys-167-Cys-182, Cys-191-Cys-203, Cys-198-Cys-216, Cys-210-Cys-225, Cys-231-Cys-243, Cys-238-Cys-256, Cys-250-Cys-265, Cys-270-Cys-282, Cys-277-Cys-295, Cys-289-Cys-304, Cys-312-Cys-324, Cys-319-Cys-337, Cys-331-Cys-349, Cys-358-Cys-369, Cys-365-Cys-378, Cys-380-Cys-393, Cys-399-Cys-409, Cys-405-Cys-418, and Cys-420-Cys-433. Residue Asn-264 is glycosylated (N-linked (GlcNAc...) asparagine). In terms of domain architecture, EGF-like 1; atypical spans 354-394 (GEENCNVNNGGCAQKCQMVRGAVQCTCHTGYRLTEDGRTCQ). One can recognise an EGF-like 2; calcium-binding domain in the interval 395 to 434 (DVNECAEEGYCSQGCTNTEGAFQCWCEAGYELRPDRRSCK). LDL-receptor class B repeat units lie at residues 480–522 (ELVF…DWVH), 523–565 (DKLY…HPME), 566–609 (GTIY…DYAG), 610–652 (RRMY…FEDS), and 653–693 (LYWT…LHPQ). Residue Asn-498 is glycosylated (N-linked (GlcNAc...) asparagine). The region spanning 698–737 (GKNRCGDNNGGCTHLCLPSGQNYTCACPTGFRKINSHACA) is the EGF-like 3 domain. Disulfide bonds link Cys-702–Cys-713, Cys-709–Cys-722, and Cys-724–Cys-736. Asn-719 carries an N-linked (GlcNAc...) asparagine glycan. LDL-receptor class B repeat units follow at residues 785–827 (DHVY…DWVT), 828–870 (NKLY…EPMG), 871–914 (GYMY…DYGS), 915–956 (QRLY…LYGQ), and 957–998 (RIYW…FHRQ). The N-linked (GlcNAc...) asparagine glycan is linked to Asn-901. Residue Asn-1077 is glycosylated (N-linked (GlcNAc...) asparagine). LDL-receptor class B repeat units follow at residues 1093–1135 (GKVY…DAIG), 1136–1178 (RKVY…YHEM), 1179–1222 (GFMY…DKTS), 1223–1263 (SQLL…LLDS), 1264–1306 (YIYW…DRAQ), 1397–1439 (GKVY…DWVA), 1440–1482 (RNLY…FPRK), 1483–1526 (GYLF…DYDT), 1527–1568 (RRIY…QDRW), and 1569–1610 (IYWT…SPQR). N-linked (GlcNAc...) asparagine glycans are attached at residues Asn-1415 and Asn-1467. A disordered region spans residues 1661 to 1696 (ATSMNEKSPVLPNTLPTTLHSSTTKTRTSLEGAGGR). Residues 1674 to 1690 (TLPTTLHSSTTKTRTSL) show a composition bias toward low complexity. A helical membrane pass occupies residues 1726–1746 (YAIGGLLSILLILLVIAALML). Residues 1747–1905 (YRHRKSKFTD…ERKLSSESQV (159 aa)) lie on the Cytoplasmic side of the membrane. Positions 1852–1905 (ASSGSLDDTETEQLLQEEQSECSSVHTAATPERRGSLPDTGWKHERKLSSESQV) are disordered. The segment covering 1882-1905 (PERRGSLPDTGWKHERKLSSESQV) has biased composition (basic and acidic residues).

Belongs to the LDLR family. Homooligomer. Interacts with MUSK; the heterodimer forms an AGRIN receptor complex that binds AGRIN resulting in activation of MUSK. Interacts (via the extracellular domain) with SOST; the interaction facilitates the inhibition of Wnt signaling. Interacts with MESD; the interaction promotes glycosylation of LRP4 and its cell-surface expression. Post-translationally, N-glycosylation is required for cell surface location.

The protein resides in the cell membrane. Mediates SOST-dependent inhibition of bone formation. Functions as a specific facilitator of SOST-mediated inhibition of Wnt signaling. Plays a key role in the formation and the maintenance of the neuromuscular junction (NMJ), the synapse between motor neuron and skeletal muscle. Directly binds AGRIN and recruits it to the MUSK signaling complex. Mediates the AGRIN-induced phosphorylation of MUSK, the kinase of the complex. The activation of MUSK in myotubes induces the formation of NMJ by regulating different processes including the transcription of specific genes and the clustering of AChR in the postsynaptic membrane. Alternatively, may be involved in the negative regulation of the canonical Wnt signaling pathway, being able to antagonize the LRP6-mediated activation of this pathway. More generally, has been proposed to function as a cell surface endocytic receptor binding and internalizing extracellular ligands for degradation by lysosomes. Plays an essential role in the process of digit differentiation. The chain is Low-density lipoprotein receptor-related protein 4 (Lrp4) from Mus musculus (Mouse).